Here is a 525-residue protein sequence, read N- to C-terminus: Beta-1,4-xylosyltransferase IRX14 (525 aa).

Over 1–35 (MKLSALHQSYLNRRSNSFRSPTSLDSSVDGSGKSL) the chain is Cytoplasmic. The helical; Signal-anchor for type II membrane protein transmembrane segment at 36-56 (IAVFWLILHCLCCLISLVLGF) threads the bilayer. The Lumenal segment spans residues 57-525 (RFSRLVFFFL…SSSSKHQERN (469 aa)). N102, N204, and N326 each carry an N-linked (GlcNAc...) asparagine glycan. The tract at residues 452–525 (RTPWPDVPPE…SSSSKHQERN (74 aa)) is disordered. Residues 471–488 (PLSQGNTVVVIPKQQQHP) are compositionally biased toward polar residues. Positions 489 to 503 (TKIRKPKRKSKKSKH) are enriched in basic residues. Polar residues predominate over residues 508–519 (TDTTTQVYSSSS).

This sequence belongs to the glycosyltransferase 43 family. As to expression, expressed in developing interfascicular fibers and xylem cells in stems and developing secondary xylem in roots.

The protein localises to the golgi apparatus membrane. It catalyses the reaction [(1-&gt;4)-beta-D-xylan](n) + UDP-alpha-D-xylose = [(1-&gt;4)-beta-D-xylan](n+1) + UDP + H(+). Functionally, involved in the synthesis of the hemicellulose glucuronoxylan, a major component of secondary cell walls. Involved in the elongation of glucuronoxylan xylosyl backbone. Xylan xylosyltransferase that acts cooperatively with IRX9 to achieve the successive addition of xylosyl residues during xylan backbone elongation. Required for the proper composition and structural properties of released seed coat mucilage. Required for the production of highly branched xylan polymers in seed coat mucilage. Xylan with xylose side chains seems to be necessary for pectin attachment to the seed surface. Together with MUCI70, required for xylan and pectin synthesis in seed coat epidermal (SCE) cells. This is Beta-1,4-xylosyltransferase IRX14 from Arabidopsis thaliana (Mouse-ear cress).